Here is a 98-residue protein sequence, read N- to C-terminus: MTTVGVSLFRRSPEKITMKIATFLGLSFLLIASYVLICEAQHPGFQELLILEENMRDPENSKERSCAKPRENCNRMNILCCRGECVCPTFGDCFCYGD.

The first 40 residues, 1–40 (MTTVGVSLFRRSPEKITMKIATFLGLSFLLIASYVLICEA), serve as a signal peptide directing secretion. The propeptide occupies 41–64 (QHPGFQELLILEENMRDPENSKER). Disulfide bonds link Cys66/Cys81, Cys73/Cys85, and Cys80/Cys95.

The protein belongs to the hainantoxin family. 17 subfamily. In terms of tissue distribution, expressed by the venom gland.

It is found in the secreted. Putative ion channel inhibitor. The chain is Hainantoxin-XVII from Cyriopagopus hainanus (Chinese bird spider).